Consider the following 473-residue polypeptide: Lactate utilization protein B (473 aa).

2 4Fe-4S ferredoxin-type domains span residues 302-332 (GSEF…GHSY) and 351-380 (YDDY…LHDL). [4Fe-4S] cluster is bound by residues Cys311, Cys314, Cys317, Cys321, Cys364, Cys367, and Cys371.

It belongs to the LutB/YkgF family.

In terms of biological role, is involved in L-lactate degradation and allows cells to grow with lactate as the sole carbon source. Has probably a role as an electron transporter during oxidation of L-lactate. The polypeptide is Lactate utilization protein B (Bacillus cereus (strain G9842)).